Here is a 589-residue protein sequence, read N- to C-terminus: Probable translation initiation factor IF-2 (589 aa).

Positions 14 to 231 (LRQPIVCVLG…GLAQRFLESE (218 aa)) constitute a tr-type G domain. Residues 23 to 30 (GHVDHGKT) form a G1 region. 23–30 (GHVDHGKT) provides a ligand contact to GTP. Positions 48–52 (GITQR) are G2. The tract at residues 84-87 (DTPG) is G3. Residues 84-88 (DTPGH) and 138-141 (NKID) contribute to the GTP site. The interval 138 to 141 (NKID) is G4. A G5 region spans residues 206–208 (SAK).

This sequence belongs to the TRAFAC class translation factor GTPase superfamily. Classic translation factor GTPase family. IF-2 subfamily.

Its function is as follows. Function in general translation initiation by promoting the binding of the formylmethionine-tRNA to ribosomes. Seems to function along with eIF-2. This is Probable translation initiation factor IF-2 from Thermoplasma volcanium (strain ATCC 51530 / DSM 4299 / JCM 9571 / NBRC 15438 / GSS1).